The primary structure comprises 360 residues: Peptide chain release factor 1 (360 aa).

Gln237 is subject to N5-methylglutamine.

This sequence belongs to the prokaryotic/mitochondrial release factor family. Post-translationally, methylated by PrmC. Methylation increases the termination efficiency of RF1.

The protein localises to the cytoplasm. Its function is as follows. Peptide chain release factor 1 directs the termination of translation in response to the peptide chain termination codons UAG and UAA. The polypeptide is Peptide chain release factor 1 (Cellvibrio japonicus (strain Ueda107) (Pseudomonas fluorescens subsp. cellulosa)).